The sequence spans 363 residues: Peptide chain release factor 2 (363 aa).

The residue at position 251 (Gln-251) is an N5-methylglutamine.

The protein belongs to the prokaryotic/mitochondrial release factor family. In terms of processing, methylated by PrmC. Methylation increases the termination efficiency of RF2.

It is found in the cytoplasm. Peptide chain release factor 2 directs the termination of translation in response to the peptide chain termination codons UGA and UAA. This chain is Peptide chain release factor 2, found in Helicobacter acinonychis (strain Sheeba).